The primary structure comprises 453 residues: Bifunctional protein GlmU (453 aa).

Residues 1–225 (MHAHVILAAG…AEEALGVNTR (225 aa)) are pyrophosphorylase. UDP-N-acetyl-alpha-D-glucosamine is bound by residues 7–10 (LAAG), K21, Q72, and 77–78 (GT). Mg(2+) is bound at residue D102. UDP-N-acetyl-alpha-D-glucosamine contacts are provided by G138, E152, N167, and N223. Mg(2+) is bound at residue N223. A linker region spans residues 226-246 (EELARVEGVLLRRLRAEWMGK). The tract at residues 247 to 453 (GVRMILPETI…GYALRKLGEG (207 aa)) is N-acetyltransferase. R329 and K347 together coordinate UDP-N-acetyl-alpha-D-glucosamine. Residue H359 is the Proton acceptor of the active site. UDP-N-acetyl-alpha-D-glucosamine is bound by residues Y362 and N373. Acetyl-CoA contacts are provided by residues A376, 382 to 383 (NY), S401, A419, and R436.

In the N-terminal section; belongs to the N-acetylglucosamine-1-phosphate uridyltransferase family. It in the C-terminal section; belongs to the transferase hexapeptide repeat family. Homotrimer. Mg(2+) serves as cofactor.

The protein localises to the cytoplasm. It catalyses the reaction alpha-D-glucosamine 1-phosphate + acetyl-CoA = N-acetyl-alpha-D-glucosamine 1-phosphate + CoA + H(+). The catalysed reaction is N-acetyl-alpha-D-glucosamine 1-phosphate + UTP + H(+) = UDP-N-acetyl-alpha-D-glucosamine + diphosphate. It functions in the pathway nucleotide-sugar biosynthesis; UDP-N-acetyl-alpha-D-glucosamine biosynthesis; N-acetyl-alpha-D-glucosamine 1-phosphate from alpha-D-glucosamine 6-phosphate (route II): step 2/2. It participates in nucleotide-sugar biosynthesis; UDP-N-acetyl-alpha-D-glucosamine biosynthesis; UDP-N-acetyl-alpha-D-glucosamine from N-acetyl-alpha-D-glucosamine 1-phosphate: step 1/1. The protein operates within bacterial outer membrane biogenesis; LPS lipid A biosynthesis. Functionally, catalyzes the last two sequential reactions in the de novo biosynthetic pathway for UDP-N-acetylglucosamine (UDP-GlcNAc). The C-terminal domain catalyzes the transfer of acetyl group from acetyl coenzyme A to glucosamine-1-phosphate (GlcN-1-P) to produce N-acetylglucosamine-1-phosphate (GlcNAc-1-P), which is converted into UDP-GlcNAc by the transfer of uridine 5-monophosphate (from uridine 5-triphosphate), a reaction catalyzed by the N-terminal domain. The sequence is that of Bifunctional protein GlmU from Thermus thermophilus (strain ATCC 27634 / DSM 579 / HB8).